Here is a 238-residue protein sequence, read N- to C-terminus: tRNA (guanine-N(7)-)-methyltransferase (238 aa).

The S-adenosyl-L-methionine site is built by Glu-68, Glu-93, Asp-120, and Asp-143. Asp-143 is an active-site residue. Residues Lys-147, Asp-179, and 216–219 (TKFE) contribute to the substrate site.

This sequence belongs to the class I-like SAM-binding methyltransferase superfamily. TrmB family.

It carries out the reaction guanosine(46) in tRNA + S-adenosyl-L-methionine = N(7)-methylguanosine(46) in tRNA + S-adenosyl-L-homocysteine. It functions in the pathway tRNA modification; N(7)-methylguanine-tRNA biosynthesis. Catalyzes the formation of N(7)-methylguanine at position 46 (m7G46) in tRNA. The chain is tRNA (guanine-N(7)-)-methyltransferase from Stutzerimonas stutzeri (strain A1501) (Pseudomonas stutzeri).